Reading from the N-terminus, the 96-residue chain is Co-chaperonin GroES (96 aa).

Belongs to the GroES chaperonin family. As to quaternary structure, heptamer of 7 subunits arranged in a ring. Interacts with the chaperonin GroEL.

It is found in the cytoplasm. Together with the chaperonin GroEL, plays an essential role in assisting protein folding. The GroEL-GroES system forms a nano-cage that allows encapsulation of the non-native substrate proteins and provides a physical environment optimized to promote and accelerate protein folding. GroES binds to the apical surface of the GroEL ring, thereby capping the opening of the GroEL channel. This is Co-chaperonin GroES from Methylibium petroleiphilum (strain ATCC BAA-1232 / LMG 22953 / PM1).